A 707-amino-acid polypeptide reads, in one-letter code: Potassium-transporting ATPase ATP-binding subunit (707 aa).

A compositionally biased stretch (basic and acidic residues) spans 1–11; the sequence is MNTDTQKHEDA. A disordered region spans residues 1–37; that stretch reads MNTDTQKHEDAMSTTTPARAPHDDAPSGQQPGQGRVG. Helical transmembrane passes span 61–81, 89–109, 238–258, and 271–291; these read VMAK…TTAF, WFGW…NLAE, IALN…CATL, and MIVL…ALLS. Asp326 acts as the 4-aspartylphosphate intermediate in catalysis. Residues Asp363, Glu367, 397 to 404, and Lys415 each bind ATP; that span reads FTAQTRMS. Positions 542 and 546 each coordinate Mg(2+). 3 helical membrane-spanning segments follow: residues 612–632, 640–660, and 683–703; these read FAII…LNIM, AILS…PLAL, and LGGL…VSLI.

This sequence belongs to the cation transport ATPase (P-type) (TC 3.A.3) family. Type IA subfamily. In terms of assembly, the system is composed of three essential subunits: KdpA, KdpB and KdpC.

Its subcellular location is the cell membrane. It catalyses the reaction K(+)(out) + ATP + H2O = K(+)(in) + ADP + phosphate + H(+). In terms of biological role, part of the high-affinity ATP-driven potassium transport (or Kdp) system, which catalyzes the hydrolysis of ATP coupled with the electrogenic transport of potassium into the cytoplasm. This subunit is responsible for energy coupling to the transport system and for the release of the potassium ions to the cytoplasm. In Streptomyces coelicolor (strain ATCC BAA-471 / A3(2) / M145), this protein is Potassium-transporting ATPase ATP-binding subunit.